Consider the following 24-residue polypeptide: Myotoxin TmC4-47.2 (24 aa).

Residues 1–24 (KASSSAPKGWTHHGSRFTFHRGSM) are disordered. The span at 10-24 (WTHHGSRFTFHRGSM) shows a compositional bias: basic residues. A C-type lectin domain is found at 13-24 (HGSRFTFHRGSM).

Expressed by the venom gland.

Its subcellular location is the secreted. Able to depolarize frog skeletal muscle fibers, but has no effects on squid giant axons. Tetrodotoxin is able to partially antagonize the depolarization. Induces myonecrosis. This Thalassophryne maculosa (Cano toadfish) protein is Myotoxin TmC4-47.2.